The chain runs to 277 residues: Small ribosomal subunit protein uS3 (277 aa).

Residues 43–111 (IRQLMSTGME…QVQLNILEVK (69 aa)) enclose the KH type-2 domain. Positions 218–228 (QQAAAAPSRGR) are enriched in low complexity. Residues 218-277 (QQAAAAPSRGRGASDRPGRPGGADRGDRRRRTDRPAAEAAPAAEAPAVEAAAPAVEGGQA) form a disordered region. Residues 229 to 244 (GASDRPGRPGGADRGD) show a composition bias toward basic and acidic residues. A compositionally biased stretch (low complexity) spans 254–277 (AEAAPAAEAPAVEAAAPAVEGGQA).

Belongs to the universal ribosomal protein uS3 family. Part of the 30S ribosomal subunit. Forms a tight complex with proteins S10 and S14.

Functionally, binds the lower part of the 30S subunit head. Binds mRNA in the 70S ribosome, positioning it for translation. The protein is Small ribosomal subunit protein uS3 of Arthrobacter sp. (strain FB24).